We begin with the raw amino-acid sequence, 252 residues long: Small ribosomal subunit protein uS2A (252 aa).

At Ser-2 the chain carries N-acetylserine. The tract at residues 209-252 is disordered; that stretch reads EVEQQAAEETTSTGADAEESKEEVAEGQNEASEWAEENTEAVSW. The span at 241-252 shows a compositional bias: acidic residues; sequence EWAEENTEAVSW.

It belongs to the universal ribosomal protein uS2 family. Component of the small ribosomal subunit. Mature ribosomes consist of a small (40S) and a large (60S) subunit. The 40S subunit contains about 33 different proteins and 1 molecule of RNA (18S). The 60S subunit contains about 49 different proteins and 3 molecules of RNA (25S, 5.8S and 5S). Interacts with RPS21.

It is found in the cytoplasm. Functionally, required for the assembly and/or stability of the 40S ribosomal subunit. Required for the processing of the 20S rRNA-precursor to mature 18S rRNA in a late step of the maturation of 40S ribosomal subunits. The polypeptide is Small ribosomal subunit protein uS2A (Vanderwaltozyma polyspora (strain ATCC 22028 / DSM 70294 / BCRC 21397 / CBS 2163 / NBRC 10782 / NRRL Y-8283 / UCD 57-17) (Kluyveromyces polysporus)).